The following is a 244-amino-acid chain: Glutathione S-transferase theta-2 (244 aa).

Positions 2 to 82 constitute a GST N-terminal domain; that stretch reads GLELYLDLLS…YLSSKYQVAD (81 aa). Glutathione-binding positions include 40-41, 53-54, 66-67, and 104-107; these read HM, KV, ES, and DNIR. Residues 88–230 form the GST C-terminal domain; that stretch reads DLQARAQVHE…AKKMLPVPPP (143 aa).

This sequence belongs to the GST superfamily. Theta family. In terms of assembly, homodimer. In liver, highest expression found in central vein limiting plate hepatocytes. Also expressed in interlobular bile duct epithelial cells. In lung, expressed in club cells and ciliated cells of the bronchiolar epithelium and in type II alveolar cells of the lung parenchyma.

Its subcellular location is the cytoplasm. The protein localises to the cytosol. It localises to the nucleus. It carries out the reaction RX + glutathione = an S-substituted glutathione + a halide anion + H(+). In terms of biological role, conjugation of reduced glutathione to a wide number of exogenous and endogenous hydrophobic electrophiles. The protein is Glutathione S-transferase theta-2 of Mus musculus (Mouse).